Consider the following 122-residue polypeptide: C-C motif chemokine 9 (122 aa).

The first 21 residues, 1 to 21 (MKPFHTALSFLILTTALGIWA), serve as a signal peptide directing secretion. 3 cysteine pairs are disulfide-bonded: Cys-57/Cys-80, Cys-58/Cys-96, and Cys-67/Cys-107.

The protein belongs to the intercrine beta (chemokine CC) family. In terms of processing, the N-terminal is proteolytically cleaved by proteases associated with inflammatory responses. The processed forms CCL9(29-101), CCL9(30-101) and CCL9(31-101) exhibit increase in CCR1-mediated signaling and chemotaxis assays in vitro. Expressed mainly in the liver, lung, and the thymus, although some expression has been detected in a wide variety of tissues except brain.

It is found in the secreted. Its function is as follows. Monokine with inflammatory, pyrogenic and chemokinetic properties. Circulates at high concentrations in the blood of healthy animals. Binding to a high-affinity receptor activates calcium release in neutrophils. It also inhibits colony formation of bone marrow myeloid immature progenitors. The sequence is that of C-C motif chemokine 9 (Ccl9) from Mus musculus (Mouse).